Here is a 330-residue protein sequence, read N- to C-terminus: MPRSFLVKSKKAHTYHQPRAQGDELVWPPAVIPVAKEHSQSASPLLSTPLPSQTLDWNTIKQEREMLLNQSLPKMASAPEGPLVTPQPQDGESPLSESPPFYKPSFSWDTLASSYSHSYTQTPSTMQSAFLERSVRLYGSPLVPSTESPLDFRLRYSPGMDTYHCVKCNKVFSTPHGLEVHVRRSHSGTRPFACDVCGKTFGHAVSLEQHTHVHSQERSFECRMCGKAFKRSSTLSTHLLIHSDTRPYPCQFCGKRFHQKSDMKKHTYIHTGEKPHKCQVCGKAFSQSSNLITHSRKHTGFKPFSCELCTKGFQRKVDLRRHRESQHNLK.

Positions 1–20 are SNAG domain; it reads MPRSFLVKSKKAHTYHQPRA. Disordered regions lie at residues 1-21 and 75-99; these read MPRS…PRAQ and MASA…SESP. Position 8 is an N6,N6-dimethyllysine (K8). The interval 91–330 is interaction with ARIH2; it reads GESPLSESPP…RHRESQHNLK (240 aa). C2H2-type zinc fingers lie at residues 163–186, 192–214, 220–242, 248–270, 276–298, and 304–327; these read YHCV…RRSH, FACD…THVH, FECR…LLIH, YPCQ…TYIH, HKCQ…SRKH, and FSCE…ESQH. A mediates interaction with GATA1 region spans residues 164–330; it reads HCVKCNKVFS…RHRESQHNLK (167 aa).

Interacts with histone methyltransferases EHMT2 and SUV39H1. Interacts with ARIH2 (via RING-type 2) and with RUNX1T1. Forms a complex with GATA1. Component of a RCOR-GFI-KDM1A-HDAC complex. Interacts directly with RCOR1, KDM1A and HDAC2. Methylation at Lys-8 in the SNAG domain seems required for the recruitment of the corepressor complex. In terms of tissue distribution, expressed in bone marrow and in spleen. Detected in hematopoietic stem cells, erythroblasts, and megakaryocytes. Expressed in thymocytes.

The protein localises to the nucleus. Its function is as follows. Essential proto-oncogenic transcriptional regulator necessary for development and differentiation of erythroid and megakaryocytic lineages. Component of a RCOR-GFI-KDM1A-HDAC complex that suppresses, via histone deacetylase (HDAC) recruitment, a number of genes implicated in multilineage blood cell development and controls hematopoietic differentiation. Transcriptional repressor or activator depending on both promoter and cell type context; represses promoter activity of SOCS1 and SOCS3 and thus, may regulate cytokine signaling pathways. Cooperates with GATA1 to repress target gene transcription, such as the apoptosis regulator BCL2L1; GFI1B silencing in leukemic cell lines markedly increase apoptosis rate. Inhibits down-regulation of MYC and MYB as well as the cyclin-dependent kinase inhibitor CDKN1A/P21WAF1 in IL6-treated myelomonocytic cells. Represses expression of GATA3 in T-cell lymphomas and inhibits GATA1-mediated transcription; as GATA1 also mediates erythroid GFI1B transcription, both GATA1 and GFI1B participate in a feedback regulatory pathway controlling the expression of GFI1B gene in erythroid cells. Suppresses GATA1-mediated stimulation of GFI1B promoter through protein interaction. Binds to gamma-satellite DNA and to its own promoter, auto-repressing its own expression. Alters histone methylation by recruiting histone methyltransferase to target genes promoters. Plays a role in heterochromatin formation. The chain is Zinc finger protein Gfi-1b (Gfi1b) from Mus musculus (Mouse).